Here is a 108-residue protein sequence, read N- to C-terminus: Urease subunit gamma (108 aa).

It belongs to the urease gamma subunit family. As to quaternary structure, heterotrimer of UreA (gamma), UreB (beta) and UreC (alpha) subunits. Three heterotrimers associate to form the active enzyme.

The protein resides in the cytoplasm. The enzyme catalyses urea + 2 H2O + H(+) = hydrogencarbonate + 2 NH4(+). Its pathway is nitrogen metabolism; urea degradation; CO(2) and NH(3) from urea (urease route): step 1/1. The chain is Urease subunit gamma from Haloquadratum walsbyi (strain DSM 16790 / HBSQ001).